The sequence spans 85 residues: Sodium channel neurotoxin MeuNaTxalpha-1 (85 aa).

The first 19 residues, 1-19 (MNSLVMISLALLVMTGVES), serve as a signal peptide directing secretion. The LCN-type CS-alpha/beta domain occupies 21–83 (RDGYIADDKN…VPIKVSGKCN (63 aa)). The segment at 27-31 (DDKNC) is specificity module, loop 1. Cystine bridges form between cysteine 31/cysteine 82, cysteine 35/cysteine 55, cysteine 41/cysteine 65, and cysteine 45/cysteine 67. 2 specificity module, loop regions span residues 58-62 (AGQYG) and 75-83 (PIKVSGKCN). Asparagine 83 bears the Asparagine amide mark.

This sequence belongs to the long (4 C-C) scorpion toxin superfamily. Sodium channel inhibitor family. Alpha subfamily. In terms of processing, C-terminal amidation does not appear to play an important role in activity, since the non-amidated recombinant toxin and the native toxin (which is amidated) show similar activities on all sodium channels tested. As to expression, expressed by the venom gland.

It is found in the secreted. Functionally, alpha toxins bind voltage-independently at site-3 of sodium channels (Nav) and inhibit the inactivation of the activated channels, thereby blocking neuronal transmission. This toxin inhibits inactivation of Nav1.6/SCN8A (EC(50)=3.1 uM) and drosophila DmNav1 (EC(50)=1.17 uM). It also shows a weak inhibition of inactivation on Nav1.2/SCN2A Nav1.3/SCN3A, and Nav1.7/SCN9A. The toxin (1 uM) does not significantly shift the midpoint of activation at the two channels, but induces a significant depolarizing shift in the V(1/2) of inactivation of the channels. The toxin has also been shown to dose-dependently stimulates intracellular signaling in DRG neurons through activation of two kinases (type II protein kinase A (PKA-II) and MAP kinases 1/3 (MAPK1/MAPK3)). Nav1.2/SCN2A is strongly suggested to be the target channel predominantly involved in this activation. In vivo, the toxin induces a dose-dependent thermal hyperalgesia lasting 30-45 minutes. The protein is Sodium channel neurotoxin MeuNaTxalpha-1 of Mesobuthus eupeus (Lesser Asian scorpion).